The chain runs to 800 residues: Cell division cycle 5-like protein (800 aa).

2 HTH myb-type domains span residues 1-56 (MRNV…DPSI) and 57-106 (KKTE…DEVQ). DNA-binding regions (H-T-H motif) lie at residues 29–52 (WARISSLLTRKSPAQCKARWHEWL) and 80–102 (WKTIAPLVGRTASQCLERYNRLL). Disordered stretches follow at residues 109 to 186 (QDNE…KRKF), 334 to 378 (YEKL…NIRT), 399 to 445 (QTPL…KQSL), and 571 to 610 (NKTFPNDSITPSSTFDDDDDDDNHHHHHDDIDNNSINDND). Positions 113 to 122 (NGGGSGGGGT) are enriched in gly residues. Over residues 133–142 (NDPRRLRMGD) the composition is skewed to basic and acidic residues. Gly residues predominate over residues 340–351 (SGSGGGSGGVGV). Over residues 361–376 (TASISSTAANNNTNNI) the composition is skewed to low complexity. Composition is skewed to polar residues over residues 409 to 445 (NVSQTPLPKSVNNSTPFRTPNPLANQTPTQHNKKQSL) and 573 to 584 (TFPNDSITPSST). The span at 592–601 (DNHHHHHDDI) shows a compositional bias: basic and acidic residues. Coiled-coil stretches lie at residues 621–700 (NTEL…KIKN) and 748–800 (VALK…LSIF).

Belongs to the CEF1 family. In terms of assembly, component of the precatalytic, catalytic and postcatalytic spliceosome complexes.

Its subcellular location is the nucleus. The protein localises to the cytoplasm. Its function is as follows. DNA-binding protein involved in cell cycle control. May act as a transcription activator. Plays a role in pre-mRNA splicing as core component of precatalytic, catalytic and postcatalytic spliceosomal complexes. May also play a role in the response to DNA damage (DDR). The sequence is that of Cell division cycle 5-like protein (cdc5l) from Dictyostelium discoideum (Social amoeba).